A 1241-amino-acid chain; its full sequence is Dinoflagellate luciferase (1241 aa).

Luciferase stretches follow at residues 114–465, 491–842, and 868–1218; these read KTGL…IKRD, DQGF…TKRD, and EKGF…KKRD.

This sequence belongs to the calycin superfamily. Luciferase family.

It localises to the cytoplasmic vesicle. It carries out the reaction dinoflagellate luciferin + O2 = oxidized dinoflagellate luciferin + hnu + H2O + H(+). Its activity is regulated as follows. Regulated by pH: upon acidification, at a pH of 6.3, dinoflagellate luciferin is released from luciferin-binding protein LBP, allowing the interaction between Dinoflagellate luciferase and its substrate luciferin. Its function is as follows. Emits blue light flashes with a wavelength of 475 nm during the night phase. The sequence is that of Dinoflagellate luciferase from Lingulodinium polyedra (Dinoflagellate).